A 356-amino-acid polypeptide reads, in one-letter code: UDP-3-O-acylglucosamine N-acyltransferase (356 aa).

The Proton acceptor role is filled by His242.

This sequence belongs to the transferase hexapeptide repeat family. LpxD subfamily. Homotrimer.

The enzyme catalyses a UDP-3-O-[(3R)-3-hydroxyacyl]-alpha-D-glucosamine + a (3R)-hydroxyacyl-[ACP] = a UDP-2-N,3-O-bis[(3R)-3-hydroxyacyl]-alpha-D-glucosamine + holo-[ACP] + H(+). It functions in the pathway bacterial outer membrane biogenesis; LPS lipid A biosynthesis. Its function is as follows. Catalyzes the N-acylation of UDP-3-O-acylglucosamine using 3-hydroxyacyl-ACP as the acyl donor. Is involved in the biosynthesis of lipid A, a phosphorylated glycolipid that anchors the lipopolysaccharide to the outer membrane of the cell. The chain is UDP-3-O-acylglucosamine N-acyltransferase from Acinetobacter baumannii (strain AB307-0294).